Reading from the N-terminus, the 138-residue chain is Large ribosomal subunit protein uL16 (138 aa).

Residues 1 to 16 (MLIPRRVKHRKQHHPG) show a composition bias toward basic residues. A disordered region spans residues 1 to 25 (MLIPRRVKHRKQHHPGRSGAATGGT).

Belongs to the universal ribosomal protein uL16 family. As to quaternary structure, part of the 50S ribosomal subunit.

Binds 23S rRNA and is also seen to make contacts with the A and possibly P site tRNAs. The chain is Large ribosomal subunit protein uL16 from Pseudarthrobacter chlorophenolicus (strain ATCC 700700 / DSM 12829 / CIP 107037 / JCM 12360 / KCTC 9906 / NCIMB 13794 / A6) (Arthrobacter chlorophenolicus).